We begin with the raw amino-acid sequence, 1135 residues long: Potassium channel subfamily T member 2 (1135 aa).

The Cytoplasmic segment spans residues 1-63 (MVDLESEVPP…KNQRSSLRIR (63 aa)). Residues 64-84 (LFNFSLKLLSCLLYIIRVLLE) traverse the membrane as a helical segment. Topologically, residues 85–101 (NPSQGNEWSHIFWVNRS) are extracellular. Residue Asn-99 is glycosylated (N-linked (GlcNAc...) asparagine). The helical transmembrane segment at 102 to 122 (LPLWGLQVSVALISLFETILL) threads the bilayer. The Cytoplasmic portion of the chain corresponds to 123–137 (GYLSYKGNIWEQILR). The helical transmembrane segment at 138–158 (IPFILEIINAVPFIISIFWPS) threads the bilayer. Residues 159–164 (LRNLFV) are Extracellular-facing. A helical transmembrane segment spans residues 165 to 185 (PVFLNCWLAKHALENMINDLH). The Cytoplasmic portion of the chain corresponds to 186 to 198 (RAIQRTQSAMFNQ). A helical membrane pass occupies residues 199–219 (VLILISTLLCLIFTCICGIQH). Residues 220-228 (LERIGKKLN) are Extracellular-facing. The segment at residues 229–249 (LFDSLYFCIVTFSTVGFGDVT) is an intramembrane region (pore-forming). Over 250 to 256 (PETWSSK) the chain is Extracellular. Residues 257–277 (LFVVAMICVALVVLPIQFEQL) form a helical membrane-spanning segment. Topologically, residues 278 to 1135 (AYLWMERQKS…GQDSREETQL (858 aa)) are cytoplasmic. 2 consecutive RCK N-terminal domains span residues 299–435 (EKHV…DHVV) and 718–858 (NKLI…CYSL). Disordered stretches follow at residues 977 to 1010 (VEEW…HPLL), 1017 to 1036 (WARR…AEKI), and 1113 to 1135 (SEPS…ETQL). Residues 1017–1030 (WARRLSRKGPKHSG) show a composition bias toward basic residues. The span at 1118-1127 (RNSICNVTGQ) shows a compositional bias: polar residues.

Belongs to the potassium channel family. Calcium-activated (TC 1.A.1.3) subfamily. KCa4.2/KCNT2 sub-subfamily. Homotetramer. Forms heteromeric channels with KCNT1; these heterodimer channels differ from the homomers in their unitary conductance, kinetic behavior, subcellular localization, and response to activation of protein kinase C. In terms of processing, phosphorylated by protein kinase C. Phosphorylation of the C-terminal domain inhibits channel activity.

The protein resides in the cell membrane. It carries out the reaction K(+)(in) = K(+)(out). With respect to regulation, are normally in a closed state unless activated by an increase in intracellular Na(+) and Cl(-). Inhibited upon stimulation of G-protein coupled receptors, such as CHRM1 and GRM1. There is conflicting data about the effect of ATP on KNCT2 channels activity. Intracellular ATP was initially report to inhibit the channel activity. However, others studies conclude that KNCT2 channels are not inhibited by intracellular ATP. Functionally, sodium-activated and chloride-activated potassium channel. Produces rapidly activating outward rectifier K(+) currents. Contributes to regulate neuronal excitability. This is Potassium channel subfamily T member 2 (KCNT2) from Homo sapiens (Human).